Reading from the N-terminus, the 176-residue chain is Ferritin heavy polypeptide-like 17E (176 aa).

One can recognise a Ferritin-like diiron domain in the interval 10 to 159 (QNYDWQCEDA…GYLTNLRQMG (150 aa)). Positions 27, 107, and 141 each coordinate Fe cation.

The protein belongs to the ferritin family. In terms of tissue distribution, expressed in the testes and spermatogonia.

The polypeptide is Ferritin heavy polypeptide-like 17E (Mus musculus (Mouse)).